We begin with the raw amino-acid sequence, 347 residues long: GTPase Obg (347 aa).

Residues 1-159 (MQFLDQAKIY…AWVWLRLKLL (159 aa)) enclose the Obg domain. The interval 124–144 (GRGNASYKSSTNRAPRQHGPG) is disordered. The OBG-type G domain maps to 160 to 327 (ADVGLVGLPN…ILDQLITMTG (168 aa)). GTP-binding positions include 166 to 173 (GLPNAGKS), 191 to 195 (FTTLH), 212 to 215 (DIPG), 279 to 282 (NKID), and 308 to 310 (SGA). Positions 173 and 193 each coordinate Mg(2+).

This sequence belongs to the TRAFAC class OBG-HflX-like GTPase superfamily. OBG GTPase family. As to quaternary structure, monomer. The cofactor is Mg(2+).

It is found in the cytoplasm. Its function is as follows. An essential GTPase which binds GTP, GDP and possibly (p)ppGpp with moderate affinity, with high nucleotide exchange rates and a fairly low GTP hydrolysis rate. Plays a role in control of the cell cycle, stress response, ribosome biogenesis and in those bacteria that undergo differentiation, in morphogenesis control. This chain is GTPase Obg, found in Zymomonas mobilis subsp. mobilis (strain ATCC 31821 / ZM4 / CP4).